A 408-amino-acid chain; its full sequence is Probable fructose-2,6-bisphosphatase C732.02c (408 aa).

16-24 (GLPASGKTS) provides a ligand contact to ATP. D88 is a catalytic residue. 127-132 (NITDMC) contacts ATP. Y157 is a beta-D-fructose 6-phosphate binding site. Residue R213 participates in beta-D-fructose 2,6-bisphosphate binding. H214 acts as the Tele-phosphohistidine intermediate in catalysis. The beta-D-fructose 2,6-bisphosphate site is built by N220 and G226. E285 (proton donor/acceptor) is an active-site residue. Y296, R310, K314, Y325, Q351, and R355 together coordinate beta-D-fructose 2,6-bisphosphate. Residue 307 to 310 (AELR) participates in ATP binding. ATP contacts are provided by residues 351–355 (QAILR) and Y387.

In the C-terminal section; belongs to the phosphoglycerate mutase family.

It catalyses the reaction beta-D-fructose 2,6-bisphosphate + H2O = beta-D-fructose 6-phosphate + phosphate. Its function is as follows. This is predominantly if not solely a fructose-2,6-bisphosphatase. This chain is Probable fructose-2,6-bisphosphatase C732.02c, found in Schizosaccharomyces pombe (strain 972 / ATCC 24843) (Fission yeast).